The sequence spans 217 residues: Octanoyltransferase (217 aa).

Positions 33 to 208 (SSSQDEIWLV…KLCSLLGIAS (176 aa)) constitute a BPL/LPL catalytic domain. Substrate is bound by residues 72–79 (RGGQVTYH), 139–141 (SIG), and 152–154 (GLA). Cys170 serves as the catalytic Acyl-thioester intermediate.

It belongs to the LipB family.

It is found in the cytoplasm. The enzyme catalyses octanoyl-[ACP] + L-lysyl-[protein] = N(6)-octanoyl-L-lysyl-[protein] + holo-[ACP] + H(+). It participates in protein modification; protein lipoylation via endogenous pathway; protein N(6)-(lipoyl)lysine from octanoyl-[acyl-carrier-protein]: step 1/2. Catalyzes the transfer of endogenously produced octanoic acid from octanoyl-acyl-carrier-protein onto the lipoyl domains of lipoate-dependent enzymes. Lipoyl-ACP can also act as a substrate although octanoyl-ACP is likely to be the physiological substrate. The polypeptide is Octanoyltransferase (Pseudoalteromonas atlantica (strain T6c / ATCC BAA-1087)).